The sequence spans 441 residues: Alpha-methylserine aldolase (441 aa).

Lys-256 is subject to N6-(pyridoxal phosphate)lysine.

It belongs to the SHMT family. Alpha-methylserine aldolase subfamily. Homodimer. Pyridoxal 5'-phosphate is required as a cofactor.

The enzyme catalyses 2-methyl-L-serine = formaldehyde + L-alanine. In terms of biological role, catalyzes the reversible interconversion of alpha-methyl-L-serine to L-alanine and formaldehyde. The protein is Alpha-methylserine aldolase of Variovorax paradoxus.